Reading from the N-terminus, the 465-residue chain is ATP-dependent RNA helicase ddx19 (465 aa).

Over residues 1–20 the composition is skewed to basic and acidic residues; that stretch reads MSEKETNTTSTENKEKEKQE. Residues 1 to 45 are disordered; it reads MSEKETNTTSTENKEKEKQEQTNTNSTTESTNNQVDEEYERPGRS. Low complexity predominate over residues 21–34; that stretch reads QTNTNSTTESTNNQ. Positions 70-98 match the Q motif motif; the sequence is KTFEELGLKPELLKGVYAMGYNKPSKIQE. One can recognise a Helicase ATP-binding domain in the interval 102–268; sequence PIIIQSPNNL…KKIVQDPYTS (167 aa). 115–122 is an ATP binding site; the sequence is SQSGTGKT. Positions 215 to 218 match the DEAD box motif; the sequence is DEAD. The Helicase C-terminal domain occupies 297–449; that stretch reads ILSDIYGFIS…ELKSSEIESL (153 aa).

Belongs to the DEAD box helicase family. DDX19/DBP5 subfamily.

The enzyme catalyses ATP + H2O = ADP + phosphate + H(+). In terms of biological role, ATP-binding RNA helicase required for normal differentiation and development. The sequence is that of ATP-dependent RNA helicase ddx19 (helC) from Dictyostelium discoideum (Social amoeba).